The primary structure comprises 709 residues: ATP-dependent zinc metalloprotease YME1 homolog (709 aa).

A disordered region spans residues 152–182; that stretch reads FTSDTSSTVSSTPSLNHSLQNSMPPSTPTPP. Low complexity predominate over residues 153 to 165; sequence TSDTSSTVSSTPS. Residues 217 to 239 traverse the membrane as a helical segment; it reads IFKFIAGLSVASYFVLLGMSIFA. 307–314 contacts ATP; it reads GPPGTGKT. His530 contributes to the Zn(2+) binding site. Residue Glu531 is part of the active site. Zn(2+)-binding residues include His534 and Asp608.

It in the N-terminal section; belongs to the AAA ATPase family. The protein in the C-terminal section; belongs to the peptidase M41 family. It depends on Zn(2+) as a cofactor.

The protein resides in the mitochondrion membrane. Putative ATP-dependent protease. In Schizosaccharomyces pombe (strain 972 / ATCC 24843) (Fission yeast), this protein is ATP-dependent zinc metalloprotease YME1 homolog.